Reading from the N-terminus, the 298-residue chain is L-xylulose reductase (298 aa).

3 residues coordinate NADP(+): Ile19, Asp68, and Asn103. Residues Ser161, Ser162, and Tyr175 each act as proton donor in the active site. Positions 175, 179, and 207 each coordinate NADP(+). Lys179 (lowers pKa of active site Tyr) is an active-site residue.

Belongs to the short-chain dehydrogenases/reductases (SDR) family.

It carries out the reaction xylitol + NADP(+) = L-xylulose + NADPH + H(+). Its pathway is carbohydrate degradation; L-arabinose degradation via L-arabinitol; D-xylulose 5-phosphate from L-arabinose (fungal route): step 3/5. Functionally, L-xylulose reductase involved in the catabolism of L-arabinose through an oxidoreductive pathway. Catalyzes the NADPH-dependent reduction of L-xylulose. In Aspergillus niger (strain ATCC 1015 / CBS 113.46 / FGSC A1144 / LSHB Ac4 / NCTC 3858a / NRRL 328 / USDA 3528.7), this protein is L-xylulose reductase.